The following is a 97-amino-acid chain: Large ribosomal subunit protein bL28 (97 aa).

It belongs to the bacterial ribosomal protein bL28 family.

The chain is Large ribosomal subunit protein bL28 from Rickettsia canadensis (strain McKiel).